We begin with the raw amino-acid sequence, 606 residues long: Armadillo repeat-containing X-linked protein 5 (606 aa).

The segment at 1-85 is disordered; sequence MIGSKTKRKA…KVKKKKDKTN (85 aa). Positions 15–26 are enriched in polar residues; that stretch reads GASSKPGTNSPA. The segment covering 40–59 has biased composition (basic and acidic residues); that stretch reads VKAEPKEEWGNQAEARDEAV. ARM repeat units lie at residues 349-388, 470-509, 511-551, and 568-606; these read CKSR…GISP, VKFD…CLSK, QANT…NINF, and SELI…ILKL.

This sequence belongs to the eutherian X-chromosome-specific Armcx family. As to expression, highly expressed in the developing neural tissues, neural crest derivatives and hind limbs.

The chain is Armadillo repeat-containing X-linked protein 5 (Armcx5) from Mus musculus (Mouse).